The sequence spans 407 residues: Ornithine cyclodeaminase (407 aa).

Asn-233, Ala-234, Asp-312, Thr-344, Met-345, Leu-346, His-347, Asp-365, Asp-388, and Val-389 together coordinate NAD(+).

This sequence belongs to the AgrE/ArgZ ornithine cyclodeaminase family. The cofactor is NAD(+).

The catalysed reaction is L-ornithine = L-proline + NH4(+). Catalyzes the conversion of ornithine to proline, with the release of ammonia. The sequence is that of Ornithine cyclodeaminase from Archaeoglobus fulgidus (strain ATCC 49558 / DSM 4304 / JCM 9628 / NBRC 100126 / VC-16).